Here is a 352-residue protein sequence, read N- to C-terminus: MDDNKKKALAAALGQIERQFGKGAVMRMGDHDRQAIPAISTGSLGLDIALGIGGLPKGRIVEIYGPESSGKTTLTLSVIAQAQKMGATCAFVDAEHALDPEYAGKLGVNVDDLLVSQPDTGEQALEITDMLVRSNAIDVIVVDSVAALVPKAEIEGEMGDMHVGLQARLMSQALRKITGNIKNANCLVIFINQIRMKIGVMFGSPETTTGGNALKFYASVRLDIRRTGAVKEGDEVVGSETRVKVVKNKVAPPFRQAEFQILYGKGIYLNGEMIDLGVLHGFVEKSGAWYAYNGSKIGQGKANSAKFLADNPDIAATLEKQIRDKLLTAAPDVKAAANREPVAEVEEADTDI.

65–72 (GPESSGKT) serves as a coordination point for ATP.

This sequence belongs to the RecA family.

It is found in the cytoplasm. In terms of biological role, can catalyze the hydrolysis of ATP in the presence of single-stranded DNA, the ATP-dependent uptake of single-stranded DNA by duplex DNA, and the ATP-dependent hybridization of homologous single-stranded DNAs. It interacts with LexA causing its activation and leading to its autocatalytic cleavage. The protein is Protein RecA of Pseudomonas fluorescens (strain SBW25).